Reading from the N-terminus, the 343-residue chain is D-beta-hydroxybutyrate dehydrogenase, mitochondrial (343 aa).

The N-terminal 46 residues, 1 to 46 (MLAARLSRPLSQLPGKALSVRDRENGTRHTLLFYPASFSPDTRRTY), are a transit peptide targeting the mitochondrion. 60-84 (ITGCDSGFGFSLAKHLHSKGFLVFA) serves as a coordination point for NAD(+). N6-acetyllysine is present on residues Lys73 and Lys97. Lys103 is subject to N6-acetyllysine; alternate. An N6-succinyllysine; alternate modification is found at Lys103. Residues Lys132 and Lys177 each carry the N6-acetyllysine modification. Met196 is a substrate binding site. Cys209 serves as the catalytic Proton acceptor. Lys212 is subject to N6-acetyllysine. The O-linked (GlcNAc) serine glycan is linked to Ser219. Ser246 is subject to Phosphoserine. Lys258 is subject to N6-acetyllysine. Position 259 is an N6-acetyllysine; alternate (Lys259). Lys259 carries the post-translational modification N6-succinyllysine; alternate. Position 280 is an N6-acetyllysine (Lys280).

The protein belongs to the short-chain dehydrogenases/reductases (SDR) family. In terms of assembly, homotetramer. Acetylation of Lys-132 is observed in liver mitochondria from fasted mice but not from fed mice.

The protein localises to the mitochondrion inner membrane. The protein resides in the mitochondrion matrix. It carries out the reaction (R)-3-hydroxybutanoate + NAD(+) = acetoacetate + NADH + H(+). Requires phosphatidylcholine as an allosteric activator for enzymatic activity. The polypeptide is D-beta-hydroxybutyrate dehydrogenase, mitochondrial (Mus musculus (Mouse)).